Consider the following 616-residue polypeptide: Glycogenin-1 (616 aa).

The UDP site is built by Leu10, Tyr16, and Arg95. UDP-alpha-D-glucose contacts are provided by Leu10, Tyr16, Arg95, Lys104, Asp120, Asp122, Asn158, Ser159, Asp185, Asp188, and Gln189. Positions 120 and 122 each coordinate UDP. 2 residues coordinate Mn(2+): Asp120 and Asp122. Tyr230 is a glycosylation site (O-linked (Glc...) tyrosine). UDP contacts are provided by His247, Gly250, and Lys253. A Mn(2+)-binding site is contributed by His247. Residues Gly250 and Lys253 each coordinate UDP-alpha-D-glucose. Residues 283 to 302 show a composition bias toward basic and acidic residues; it reads HQLNNEVSKPKISDSDKTET. Disordered stretches follow at residues 283–320, 335–354, 371–525, and 553–588; these read HQLNNEVSKPKISDSDKTETPETITPVDAPPSNEPTTN, NQNAEPVPNSDHSPAPNPVP, TNQP…EKDK, and RDATEGETKTSAVADKQEDMKLTAEETNQPQQEMPN. Basic and acidic residues predominate over residues 377–386; that stretch reads ESREYSKEND. The segment covering 400 to 419 has biased composition (polar residues); that stretch reads SPPNSTQELNSSYSVVSTQA. Over residues 450–461 the composition is skewed to low complexity; it reads STAASSNNNVSN. Composition is skewed to polar residues over residues 462–485 and 492–503; these read QPDGKNFSNSKENNISVESSPSNP and DNIQKPSVSTND. The span at 567–576 shows a compositional bias: basic and acidic residues; sequence DKQEDMKLTA. A compositionally biased stretch (polar residues) spans 577 to 586; that stretch reads EETNQPQQEM. The O-linked (Glc...) tyrosine glycan is linked to Tyr598.

This sequence belongs to the glycosyltransferase 8 family. Glycogenin subfamily. The cofactor is Mn(2+).

Its subcellular location is the cytoplasm. It is found in the vacuole. The enzyme catalyses L-tyrosyl-[glycogenin] + UDP-alpha-D-glucose = alpha-D-glucosyl-L-tyrosyl-[glycogenin] + UDP + H(+). The catalysed reaction is [1,4-alpha-D-glucosyl](n)-L-tyrosyl-[glycogenin] + UDP-alpha-D-glucose = [1,4-alpha-D-glucosyl](n+1)-L-tyrosyl-[glycogenin] + UDP + H(+). Self-glucosylating initiator of glycogen synthesis. It catalyzes the formation of a short alpha (1,4)-glucosyl chain covalently attached via a glucose 1-O-tyrosyl linkage to internal tyrosine residues and these chains act as primers for the elongation reaction catalyzed by glycogen synthase. Capable of transferring glucosyl residues to unbound acceptors such as free oligoglucans or oligoglucan derivatives. The polypeptide is Glycogenin-1 (Saccharomyces cerevisiae (strain ATCC 204508 / S288c) (Baker's yeast)).